We begin with the raw amino-acid sequence, 462 residues long: Phosphoglycerate kinase, chloroplastic (462 aa).

Residues 1 to 61 (MALSMKMRAN…AGRSRIVVEA (61 aa)) constitute a chloroplast transit peptide. The (2R)-3-phosphoglycerate site is built by Ala-83, Asp-84, Asn-86, Arg-101, Ser-123, His-124, Gly-126, Arg-127, Arg-183, His-215, and Arg-216. Gly-261 is an ADP binding site. Gly-261 is a CDP binding site. AMP contacts are provided by Lys-263 and Lys-267. Lys-267 serves as a coordination point for ATP. Gly-285 is an ADP binding site. Gly-285 contacts CDP. AMP is bound by residues Gly-286 and Gly-358. ATP is bound by residues Gly-286 and Gly-358. CDP contacts are provided by Gly-383 and Phe-388. Phe-388 lines the ADP pocket. Residue Glu-389 participates in AMP binding. ATP is bound by residues Glu-389, Asp-420, and Ser-421. Asp-420 contacts Mg(2+).

This sequence belongs to the phosphoglycerate kinase family. In terms of assembly, monomer. Requires Mg(2+) as cofactor.

The protein resides in the plastid. Its subcellular location is the chloroplast. The enzyme catalyses (2R)-3-phosphoglycerate + ATP = (2R)-3-phospho-glyceroyl phosphate + ADP. The protein operates within carbohydrate biosynthesis; Calvin cycle. The sequence is that of Phosphoglycerate kinase, chloroplastic (PGK) from Volvox carteri (Green alga).